The sequence spans 372 residues: Biglycan (372 aa).

The signal sequence occupies residues 1–19; that stretch reads MPTMWPLWLLASLLALSQA. A propeptide spanning residues 20–40 is cleaved from the precursor; the sequence is LPFEQKGFWDFTLDDGLPMLN. Residues serine 45 and serine 51 are each glycosylated (O-linked (Xyl...) (glycosaminoglycan) serine). Cystine bridges form between cysteine 67–cysteine 73 and cysteine 71–cysteine 80. LRR repeat units follow at residues 86–106, 107–130, 131–154, 155–175, 176–199, 200–224, 225–245, 246–269, 270–293, 294–316, 317–346, and 347–372; these read KAVP…NNEI, SELR…NNKI, SKIH…KNHL, VEIP…DNRI, RKVP…GNPL, ENSG…EAKL, TGIP…HNKI, QAIE…HNQI, RMIE…NNKL, SRVP…TNNI, TKVG…NNPV, and PYWE…NYKK. N-linked (GlcNAc...) asparagine glycosylation is found at asparagine 274 and asparagine 315. A disulfide bridge connects residues cysteine 325 and cysteine 358.

The protein belongs to the small leucine-rich proteoglycan (SLRP) family. SLRP class I subfamily. In terms of assembly, homodimer. Forms a ternary complex with MFAP2 and ELN. In terms of processing, the two attached glycosaminoglycan chains can be either chondroitin sulfate or dermatan sulfate.

Its subcellular location is the secreted. It is found in the extracellular space. It localises to the extracellular matrix. In terms of biological role, may be involved in collagen fiber assembly. In Equus caballus (Horse), this protein is Biglycan (BGN).